A 615-amino-acid chain; its full sequence is Nuclear receptor subfamily 1 group D member 1 (615 aa).

Positions 1–12 (MTTLDSNNNTGG) are enriched in polar residues. The segment at 1–70 (MTTLDSNNNT…TQDPARSFGT (70 aa)) is required for phosphorylation by CSNK1E and cytoplasmic localization. Residues 1–120 (MTTLDSNNNT…SSRVSPSKGT (120 aa)) form a disordered region. The interval 1–129 (MTTLDSNNNT…TSNITKLNGM (129 aa)) is modulating. Low complexity predominate over residues 14-34 (ITYIGSSGSSPSRTSPESLYS). The span at 35-48 (DSSNGSFQSLTQGC) shows a compositional bias: polar residues. Positions 49 to 285 (PTYFPPSPTG…PPRSPSPEPT (237 aa)) are crucial for activation of GJA1. Phosphoserine; by GSK3-beta occurs at positions 55 and 59. The segment covering 72 to 103 (PPSLSDDSSPSSASSSSSSSSSSFYNGSPPGS) has biased composition (low complexity). The segment at residues 130-206 (VLLCKVCGDV…VGMSRDAVRF (77 aa)) is a DNA-binding region (nuclear receptor). 2 NR C4-type zinc fingers span residues 133–153 (CKVC…CEGC) and 170–194 (CLKN…FKKC). 2 positions are modified to N6-acetyllysine; by KAT5: Lys192 and Lys193. Disordered regions lie at residues 235–287 (LCPL…PTVE), 312–337 (PGNF…SQGC), and 357–385 (NGLR…PNSN). Pro residues predominate over residues 253–262 (PSPPPAPAPT). Thr275 is modified (phosphothreonine; by CDK1). In terms of domain architecture, NR LBD spans 285–615 (TVEDVISQVA…KLLSFRVDAQ (331 aa)). Lys401 carries the N6-acetyllysine modification. Cys419 provides a ligand contact to heme. The residue at position 592 (Lys592) is an N6-acetyllysine. His603 is a binding site for heme.

It belongs to the nuclear hormone receptor family. NR1 subfamily. As to quaternary structure, binds DNA as a monomer or a homodimer. Interacts with C1D, NR2E3, SP1 and ZNHIT1. Interacts with OPHN1 (via C-terminus). Interacts with PER2; the interaction associates PER2 to BMAL1 promoter region. Interacts with CRY1. Interacts with CCAR2. Interacts with SIAH2. Interacts with FBXW7 and CDK1. Interacts with HUWE1. Interacts with NR0B2. Interacts with NFIL3. Interacts (via domain NR LBD) with HSP90AA1 and HSP90AB1. Ubiquitinated, leading to its proteasomal degradation. Ubiquitinated by the SCF(FBXW7) complex when phosphorylated by CDK1 leading to its proteasomal degradation. Ubiquitinated by SIAH2; leading to its proteasomal degradation. Rapidly ubiquitinated in response to inflammatory triggers and sumoylation is a prerequisite to its ubiquitination. In terms of processing, sumoylated by UBE2I, desumoylated by SENP1, and sumoylation is a prerequisite to its ubiquitination. Post-translationally, phosphorylated by CSNK1E; phosphorylation enhances its cytoplasmic localization. Undergoes lysosome-mediated degradation in a time-dependent manner in the liver.

Its subcellular location is the nucleus. It is found in the cytoplasm. It localises to the cell projection. The protein localises to the dendrite. The protein resides in the dendritic spine. In terms of biological role, transcriptional repressor which coordinates circadian rhythm and metabolic pathways in a heme-dependent manner. Integral component of the complex transcription machinery that governs circadian rhythmicity and forms a critical negative limb of the circadian clock by directly repressing the expression of core clock components BMAL1, CLOCK and CRY1. Also regulates genes involved in metabolic functions, including lipid and bile acid metabolism, adipogenesis, gluconeogenesis and the macrophage inflammatory response. Acts as a receptor for heme which stimulates its interaction with the NCOR1/HDAC3 corepressor complex, enhancing transcriptional repression. Recognizes two classes of DNA response elements within the promoter of its target genes and can bind to DNA as either monomers or homodimers, depending on the nature of the response element. Binds as a monomer to a response element composed of the consensus half-site motif 5'-[A/G]GGTCA-3' preceded by an A/T-rich 5' sequence (RevRE), or as a homodimer to a direct repeat of the core motif spaced by two nucleotides (RevDR-2). Acts as a potent competitive repressor of ROR alpha (RORA) function and regulates the levels of its ligand heme by repressing the expression of PPARGC1A, a potent inducer of heme synthesis. Regulates lipid metabolism by repressing the expression of APOC3 and by influencing the activity of sterol response element binding proteins (SREBPs); represses INSIG2 which interferes with the proteolytic activation of SREBPs which in turn govern the rhythmic expression of enzymes with key functions in sterol and fatty acid synthesis. Regulates gluconeogenesis via repression of G6PC1 and PEPCK and adipocyte differentiation via repression of PPARG. Regulates glucagon release in pancreatic alpha-cells via the AMPK-NAMPT-SIRT1 pathway and the proliferation, glucose-induced insulin secretion and expression of key lipogenic genes in pancreatic-beta cells. Positively regulates bile acid synthesis by increasing hepatic expression of CYP7A1 via repression of NR0B2 and NFIL3 which are negative regulators of CYP7A1. Modulates skeletal muscle oxidative capacity by regulating mitochondrial biogenesis and autophagy; controls mitochondrial biogenesis and respiration by interfering with the STK11-PRKAA1/2-SIRT1-PPARGC1A signaling pathway. Represses the expression of SERPINE1/PAI1, an important modulator of cardiovascular disease and the expression of inflammatory cytokines and chemokines in macrophages. Represses gene expression at a distance in macrophages by inhibiting the transcription of enhancer-derived RNAs (eRNAs). Plays a role in the circadian regulation of body temperature and negatively regulates thermogenic transcriptional programs in brown adipose tissue (BAT); imposes a circadian oscillation in BAT activity, increasing body temperature when awake and depressing thermogenesis during sleep. In concert with NR2E3, regulates transcriptional networks critical for photoreceptor development and function. In addition to its activity as a repressor, can also act as a transcriptional activator. In the ovarian granulosa cells acts as a transcriptional activator of STAR which plays a role in steroid biosynthesis. In collaboration with SP1, activates GJA1 transcription in a heme-independent manner. Represses the transcription of CYP2B10, CYP4A10 and CYP4A14. Represses the transcription of CES2. Represses and regulates the circadian expression of TSHB in a NCOR1-dependent manner. Negatively regulates the protein stability of NR3C1 and influences the time-dependent subcellular distribution of NR3C1, thereby affecting its transcriptional regulatory activity. Plays a critical role in the circadian control of neutrophilic inflammation in the lung; under resting, non-stress conditions, acts as a rhythmic repressor to limit inflammatory activity whereas in the presence of inflammatory triggers undergoes ubiquitin-mediated degradation thereby relieving inhibition of the inflammatory response. Plays a key role in the circadian regulation of microglial activation and neuroinflammation; suppresses microglial activation through the NF-kappaB pathway in the central nervous system. Plays a role in the regulation of the diurnal rhythms of lipid and protein metabolism in the skeletal muscle via transcriptional repression of genes controlling lipid and amino acid metabolism in the muscle. This chain is Nuclear receptor subfamily 1 group D member 1 (Nr1d1), found in Rattus norvegicus (Rat).